Reading from the N-terminus, the 332-residue chain is Flotillin-like protein FloA (332 aa).

The next 2 helical transmembrane spans lie at 6-26 (LGYLILTFVVLLLLVLFFSFV) and 28-48 (VGLWISAAAADVRVGIFYMIG).

The protein belongs to the flotillin-like FloA family. In terms of assembly, homooligomerizes.

The protein localises to the cell membrane. The protein resides in the membrane raft. Functionally, found in functional membrane microdomains (FMM) that may be equivalent to eukaryotic membrane rafts. FMMs are highly dynamic and increase in number as cells age. Flotillins are thought to be important factors in membrane fluidity. The polypeptide is Flotillin-like protein FloA (Symbiobacterium thermophilum (strain DSM 24528 / JCM 14929 / IAM 14863 / T)).